A 159-amino-acid polypeptide reads, in one-letter code: ATP synthase subunit b (159 aa).

Residues 2 to 22 (NISIPQIIAAILNFIILLLIV) form a helical membrane-spanning segment.

It belongs to the ATPase B chain family. F-type ATPases have 2 components, F(1) - the catalytic core - and F(0) - the membrane proton channel. F(1) has five subunits: alpha(3), beta(3), gamma(1), delta(1), epsilon(1). F(0) has three main subunits: a(1), b(2) and c(10-14). The alpha and beta chains form an alternating ring which encloses part of the gamma chain. F(1) is attached to F(0) by a central stalk formed by the gamma and epsilon chains, while a peripheral stalk is formed by the delta and b chains.

It localises to the cell membrane. In terms of biological role, f(1)F(0) ATP synthase produces ATP from ADP in the presence of a proton or sodium gradient. F-type ATPases consist of two structural domains, F(1) containing the extramembraneous catalytic core and F(0) containing the membrane proton channel, linked together by a central stalk and a peripheral stalk. During catalysis, ATP synthesis in the catalytic domain of F(1) is coupled via a rotary mechanism of the central stalk subunits to proton translocation. Its function is as follows. Component of the F(0) channel, it forms part of the peripheral stalk, linking F(1) to F(0). The polypeptide is ATP synthase subunit b (Clostridium botulinum (strain Loch Maree / Type A3)).